The following is a 181-amino-acid chain: Peptidyl-tRNA hydrolase (181 aa).

Tyr14 is a binding site for tRNA. His19 functions as the Proton acceptor in the catalytic mechanism. Tyr62, Asn64, and Asn108 together coordinate tRNA.

It belongs to the PTH family. In terms of assembly, monomer.

It is found in the cytoplasm. The enzyme catalyses an N-acyl-L-alpha-aminoacyl-tRNA + H2O = an N-acyl-L-amino acid + a tRNA + H(+). Functionally, hydrolyzes ribosome-free peptidyl-tRNAs (with 1 or more amino acids incorporated), which drop off the ribosome during protein synthesis, or as a result of ribosome stalling. Its function is as follows. Catalyzes the release of premature peptidyl moieties from peptidyl-tRNA molecules trapped in stalled 50S ribosomal subunits, and thus maintains levels of free tRNAs and 50S ribosomes. In Campylobacter jejuni subsp. jejuni serotype O:2 (strain ATCC 700819 / NCTC 11168), this protein is Peptidyl-tRNA hydrolase.